Consider the following 184-residue polypeptide: Ribosome-recycling factor (184 aa).

It belongs to the RRF family.

The protein localises to the cytoplasm. In terms of biological role, responsible for the release of ribosomes from messenger RNA at the termination of protein biosynthesis. May increase the efficiency of translation by recycling ribosomes from one round of translation to another. The protein is Ribosome-recycling factor of Aquifex aeolicus (strain VF5).